We begin with the raw amino-acid sequence, 736 residues long: DEAD-box ATP-dependent RNA helicase 21 (736 aa).

Residues L14 to A38 adopt a coiled-coil conformation. The segment covering E25–A38 has biased composition (basic and acidic residues). Disordered stretches follow at residues E25 to R178 and K231 to E263. Residues P46–N58 are compositionally biased toward pro residues. Composition is skewed to basic and acidic residues over residues S64–K166 and K231–D252. Residues D137 to E167 are a coiled coil. A Q motif motif is present at residues R315 to M343. One can recognise a Helicase ATP-binding domain in the interval I346–V541. A359–T366 is an ATP binding site. A DEAD box motif is present at residues D472 to D475. The 145-residue stretch at R568–E712 folds into the Helicase C-terminal domain. Positions V704–H736 are disordered.

Belongs to the DEAD box helicase family. DDX23/PRP28 subfamily.

It is found in the cytoplasm. It localises to the nucleus. It catalyses the reaction ATP + H2O = ADP + phosphate + H(+). Functionally, ATP-dependent RNA helicase involved in mRNA splicing. May destabilize the U1/5'-splice site duplex to permit an effective competition for the 5'-splice site by the U6 snRNA, resulting in the switch between U1 and U6 at the 5'-splice site. May also act to unwind the U4/U6 base-pairing interaction in the U4/U6/U5 snRNP, facilitating the first covalent step of splicing. The polypeptide is DEAD-box ATP-dependent RNA helicase 21 (Oryza sativa subsp. japonica (Rice)).